Consider the following 508-residue polypeptide: Photosystem II CP47 reaction center protein (508 aa).

The next 6 membrane-spanning stretches (helical) occupy residues 21–36, 101–115, 140–156, 203–218, 237–252, and 457–472; these read SVHI…WAGS, IVFS…IWHW, GIHL…FGAF, IAAG…FHLS, VLSS…AFVV, and SFAL…HGSR.

Belongs to the PsbB/PsbC family. PsbB subfamily. In terms of assembly, PSII is composed of 1 copy each of membrane proteins PsbA, PsbB, PsbC, PsbD, PsbE, PsbF, PsbH, PsbI, PsbJ, PsbK, PsbL, PsbM, PsbT, PsbX, PsbY, PsbZ, Psb30/Ycf12, at least 3 peripheral proteins of the oxygen-evolving complex and a large number of cofactors. It forms dimeric complexes. Binds multiple chlorophylls. PSII binds additional chlorophylls, carotenoids and specific lipids. is required as a cofactor.

It localises to the plastid. The protein localises to the chloroplast thylakoid membrane. Its function is as follows. One of the components of the core complex of photosystem II (PSII). It binds chlorophyll and helps catalyze the primary light-induced photochemical processes of PSII. PSII is a light-driven water:plastoquinone oxidoreductase, using light energy to abstract electrons from H(2)O, generating O(2) and a proton gradient subsequently used for ATP formation. This chain is Photosystem II CP47 reaction center protein, found in Helianthus annuus (Common sunflower).